Consider the following 261-residue polypeptide: MHKKIARWVQDKKSGIKRAVVTAYDYPFARLAAEAGVHGILVGDSLGMVVGGGSDTLGVTLEQMAYHTGMVVRGAGDCLVFADLPFGSYEKGPEQAWAAAVTLLRAGADVVKLEGGAEMASTVAFCTERGINICAHIGLTPQRVRQWGSFQRQGTDADSARRLQADAGALAEAGARFLVLEAVPDALAANITRDIAIPTIGIGAGPDTDAQVLVIHDLLGLGTESPPFARRYIEGGRIMRDALAEYVREVGNSEFPPRRKR.

2 residues coordinate Mg(2+): aspartate 44 and aspartate 83. Residues 44–45 (DS), aspartate 83, and lysine 112 each bind 3-methyl-2-oxobutanoate. Mg(2+) is bound at residue glutamate 114. The Proton acceptor role is filled by glutamate 181.

It belongs to the PanB family. In terms of assembly, homodecamer; pentamer of dimers. It depends on Mg(2+) as a cofactor.

The protein resides in the cytoplasm. It carries out the reaction 3-methyl-2-oxobutanoate + (6R)-5,10-methylene-5,6,7,8-tetrahydrofolate + H2O = 2-dehydropantoate + (6S)-5,6,7,8-tetrahydrofolate. It participates in cofactor biosynthesis; (R)-pantothenate biosynthesis; (R)-pantoate from 3-methyl-2-oxobutanoate: step 1/2. Catalyzes the reversible reaction in which hydroxymethyl group from 5,10-methylenetetrahydrofolate is transferred onto alpha-ketoisovalerate to form ketopantoate. In Acidithiobacillus ferrooxidans (strain ATCC 23270 / DSM 14882 / CIP 104768 / NCIMB 8455) (Ferrobacillus ferrooxidans (strain ATCC 23270)), this protein is 3-methyl-2-oxobutanoate hydroxymethyltransferase.